A 233-amino-acid polypeptide reads, in one-letter code: Small ribosomal subunit protein uS3 (233 aa).

Positions 39-107 constitute a KH type-2 domain; it reads VRKYLTKELE…PAQINIAEVR (69 aa). The interval 214-233 is disordered; the sequence is VEQPEKPSAQPKKQQRKGRK.

The protein belongs to the universal ribosomal protein uS3 family. In terms of assembly, part of the 30S ribosomal subunit. Forms a tight complex with proteins S10 and S14.

Functionally, binds the lower part of the 30S subunit head. Binds mRNA in the 70S ribosome, positioning it for translation. The sequence is that of Small ribosomal subunit protein uS3 from Pectobacterium atrosepticum (strain SCRI 1043 / ATCC BAA-672) (Erwinia carotovora subsp. atroseptica).